Here is a 448-residue protein sequence, read N- to C-terminus: Methionine aminopeptidase 2-1 (448 aa).

The disordered stretch occupies residues 1-83 (MAAQVIPELQ…TQKAQTEPPR (83 aa)). A compositionally biased stretch (acidic residues) spans 32-48 (ENEDGDSEDDNGDDQGA). Positions 59–73 (AKKKKKKKPKKKKKD) are enriched in basic residues. Position 198 (His-198) interacts with substrate. Residues Asp-218, Asp-229, and His-298 each coordinate a divalent metal cation. His-306 serves as a coordination point for substrate. A divalent metal cation contacts are provided by Glu-334 and Glu-429.

The protein belongs to the peptidase M24A family. Methionine aminopeptidase eukaryotic type 2 subfamily. Co(2+) serves as cofactor. Zn(2+) is required as a cofactor. It depends on Mn(2+) as a cofactor. Requires Fe(2+) as cofactor.

Its subcellular location is the cytoplasm. It catalyses the reaction Release of N-terminal amino acids, preferentially methionine, from peptides and arylamides.. Its function is as follows. Cotranslationally removes the N-terminal methionine from nascent proteins. The N-terminal methionine is often cleaved when the second residue in the primary sequence is small and uncharged (Met-Ala-, Cys, Gly, Pro, Ser, Thr, or Val). The protein is Methionine aminopeptidase 2-1 of Ajellomyces capsulatus (strain G186AR / H82 / ATCC MYA-2454 / RMSCC 2432) (Darling's disease fungus).